A 300-amino-acid polypeptide reads, in one-letter code: Protoheme IX farnesyltransferase (300 aa).

Transmembrane regions (helical) follow at residues 28–48, 50–70, 100–120, 122–142, 149–169, 176–196, 222–242, 243–263, and 280–300; these read VVAL…PTIL, VQPL…AAAL, ALIF…VFTN, LTAW…TAYL, NIVI…TAVT, ALLL…ALAI, CILL…LVGM, SGPL…YKAW, and FSIY…YLWA.

The protein belongs to the UbiA prenyltransferase family. Protoheme IX farnesyltransferase subfamily.

It is found in the cell inner membrane. It carries out the reaction heme b + (2E,6E)-farnesyl diphosphate + H2O = Fe(II)-heme o + diphosphate. The protein operates within porphyrin-containing compound metabolism; heme O biosynthesis; heme O from protoheme: step 1/1. Functionally, converts heme B (protoheme IX) to heme O by substitution of the vinyl group on carbon 2 of heme B porphyrin ring with a hydroxyethyl farnesyl side group. In Shewanella oneidensis (strain ATCC 700550 / JCM 31522 / CIP 106686 / LMG 19005 / NCIMB 14063 / MR-1), this protein is Protoheme IX farnesyltransferase.